The sequence spans 255 residues: Large ribosomal subunit protein eL8 (255 aa).

Residues 1 to 16 (MPKAPKKITKPKKAEK) are compositionally biased toward basic residues. The tract at residues 1–28 (MPKAPKKITKPKKAEKKKNPLFQAKPRS) is disordered.

Belongs to the eukaryotic ribosomal protein eL8 family.

The sequence is that of Large ribosomal subunit protein eL8 (RPL7A) from Tetrahymena thermophila.